The sequence spans 262 residues: Type III pantothenate kinase (262 aa).

ATP is bound at residue aspartate 9–lysine 16. Substrate-binding positions include tyrosine 96 and glycine 103–arginine 106. The active-site Proton acceptor is the aspartate 105. Position 129 (threonine 129) interacts with ATP. Residue threonine 189 participates in substrate binding.

Belongs to the type III pantothenate kinase family. In terms of assembly, homodimer. It depends on NH4(+) as a cofactor. K(+) is required as a cofactor.

It localises to the cytoplasm. The enzyme catalyses (R)-pantothenate + ATP = (R)-4'-phosphopantothenate + ADP + H(+). It participates in cofactor biosynthesis; coenzyme A biosynthesis; CoA from (R)-pantothenate: step 1/5. In terms of biological role, catalyzes the phosphorylation of pantothenate (Pan), the first step in CoA biosynthesis. This Burkholderia ambifaria (strain MC40-6) protein is Type III pantothenate kinase.